We begin with the raw amino-acid sequence, 179 residues long: uncharacterized protein (179 aa).

The segment at residues 1–27 (MKTISKQLSAVIFPFIFSACVSQSASS) is a signal peptide (or 24).

This is an uncharacterized protein from Haemophilus influenzae (strain ATCC 51907 / DSM 11121 / KW20 / Rd).